The primary structure comprises 148 residues: Large ribosomal subunit protein bL9 (148 aa).

This sequence belongs to the bacterial ribosomal protein bL9 family.

Its function is as follows. Binds to the 23S rRNA. The polypeptide is Large ribosomal subunit protein bL9 (Thermus thermophilus (strain ATCC BAA-163 / DSM 7039 / HB27)).